A 130-amino-acid chain; its full sequence is Small ribosomal subunit protein uS11 (130 aa).

It belongs to the universal ribosomal protein uS11 family. Part of the 30S ribosomal subunit. Interacts with proteins S7 and S18. Binds to IF-3.

Located on the platform of the 30S subunit, it bridges several disparate RNA helices of the 16S rRNA. Forms part of the Shine-Dalgarno cleft in the 70S ribosome. In Alkalilimnicola ehrlichii (strain ATCC BAA-1101 / DSM 17681 / MLHE-1), this protein is Small ribosomal subunit protein uS11.